We begin with the raw amino-acid sequence, 519 residues long: Acetylcholine receptor subunit gamma (519 aa).

The signal sequence occupies residues 1–22; sequence MQGGQRPHLLLLLLAVCLGAQS. At 23 to 240 the chain is on the extracellular side; sequence RNQEERLLAD…VVFYLLIQRK (218 aa). Asn-52 and Asn-163 each carry an N-linked (GlcNAc...) asparagine glycan. Residues Cys-150 and Cys-164 are joined by a disulfide bond. The next 3 membrane-spanning stretches (helical) occupy residues 241–265, 274–292, and 308–329; these read PLFY…IYFL, CTVA…FLVA, and YLTF…VLNV. Over 330-476 the chain is Cytoplasmic; it reads SLRSPHTHSM…WLLVGRVLDR (147 aa). A helical membrane pass occupies residues 477–497; that stretch reads VCFLAMLSLFICGTAGIFLMA.

It belongs to the ligand-gated ion channel (TC 1.A.9) family. Acetylcholine receptor (TC 1.A.9.1) subfamily. Gamma/CHRNG sub-subfamily. As to quaternary structure, pentamer of two alpha chains, and one each of the beta, delta, and gamma (in immature muscle) or epsilon (in mature muscle) chains. In terms of tissue distribution, at least in myotubes of skeletal muscle.

The protein localises to the postsynaptic cell membrane. It localises to the cell membrane. The enzyme catalyses K(+)(in) = K(+)(out). It carries out the reaction Na(+)(in) = Na(+)(out). In terms of biological role, after binding acetylcholine, the AChR responds by an extensive change in conformation that affects all subunits and leads to opening of an ion-conducting channel across the plasma membrane. This Mus musculus (Mouse) protein is Acetylcholine receptor subunit gamma (Chrng).